A 354-amino-acid chain; its full sequence is Ion-translocating oxidoreductase complex subunit D (354 aa).

4 consecutive transmembrane segments (helical) span residues 19-39 (IMLL…YYFG), 40-60 (FGVL…EFLV), 77-99 (AAVT…LSFF), and 119-139 (IFNP…ILMT). FMN phosphoryl threonine is present on threonine 187. The next 5 helical transmembrane spans lie at 221 to 241 (WISI…FNVI), 245 to 265 (IPVS…YFFK), 268 to 288 (MYYP…FFIA), 295 to 315 (SITK…IWLI), and 319 to 339 (GNYP…VPLI).

This sequence belongs to the NqrB/RnfD family. In terms of assembly, the complex is composed of six subunits: RnfA, RnfB, RnfC, RnfD, RnfE and RnfG. Requires FMN as cofactor.

The protein localises to the cell inner membrane. In terms of biological role, part of a membrane-bound complex that couples electron transfer with translocation of ions across the membrane. The protein is Ion-translocating oxidoreductase complex subunit D of Buchnera aphidicola subsp. Baizongia pistaciae (strain Bp).